We begin with the raw amino-acid sequence, 333 residues long: Transcription termination factor MTERF6, chloroplastic/mitochondrial (333 aa).

Belongs to the mTERF family.

The protein localises to the plastid. It localises to the chloroplast. The protein resides in the mitochondrion. In terms of biological role, transcription termination factor essential for chloroplast development. Required for maturation of 16S rRNA, 18S rRNA and 23S rRNA in the chloroplast. Binds to a specific region within the tRNA(Ile)(GAU) gene at a position adjacent to and downstream of the 16S rRNA gene. Required for the maturation of tRNA(Ile)(GAU). Binds to double-stranded DNA. The protein is Transcription termination factor MTERF6, chloroplastic/mitochondrial of Arabidopsis thaliana (Mouse-ear cress).